We begin with the raw amino-acid sequence, 414 residues long: Probable tRNA pseudouridine synthase D (414 aa).

The Nucleophile role is filled by Asp-90. In terms of domain architecture, TRUD spans 162 to 382 (GFPNFFGVQR…SSGDYRIISA (221 aa)).

This sequence belongs to the pseudouridine synthase TruD family.

It catalyses the reaction uridine(13) in tRNA = pseudouridine(13) in tRNA. In terms of biological role, could be responsible for synthesis of pseudouridine from uracil-13 in transfer RNAs. The polypeptide is Probable tRNA pseudouridine synthase D (Picrophilus torridus (strain ATCC 700027 / DSM 9790 / JCM 10055 / NBRC 100828 / KAW 2/3)).